A 266-amino-acid polypeptide reads, in one-letter code: Zinc transporter ZupT (266 aa).

8 consecutive transmembrane segments (helical) span residues 8–28 (LLLTLLAGLSTGIGSAMALVV), 35–55 (FLTLALGFSAGVMLYVSFVEL), 70–90 (QAAAWVATLAFFGGIFFIWAI), 123–143 (GLFTAAAIAIHNFPEGMAVFF), 152–172 (GIVIATTIALHNIPEGMAIAV), 185–205 (FTYSFLSGLAEPLGAIVGFAI), 209–229 (WLSPPVFGSVLAAVAGIMVYI), and 246–266 (LAISGLIAGMAVMALSLLLLA). 2 residues coordinate Fe(2+): asparagine 134 and glutamate 137. 2 residues coordinate Zn(2+): glutamate 137 and histidine 162. Fe(2+)-binding residues include asparagine 163, glutamate 166, and glutamate 195. Position 166 (glutamate 166) interacts with Zn(2+).

Belongs to the ZIP transporter (TC 2.A.5) family. ZupT subfamily.

It localises to the cell membrane. It catalyses the reaction Zn(2+)(in) = Zn(2+)(out). In terms of biological role, mediates zinc uptake. May also transport other divalent cations. This chain is Zinc transporter ZupT, found in Chlorobium phaeovibrioides (strain DSM 265 / 1930) (Prosthecochloris vibrioformis (strain DSM 265)).